The following is a 214-amino-acid chain: Probable transaldolase (214 aa).

K83 (schiff-base intermediate with substrate) is an active-site residue.

This sequence belongs to the transaldolase family. Type 3B subfamily.

The protein localises to the cytoplasm. It catalyses the reaction D-sedoheptulose 7-phosphate + D-glyceraldehyde 3-phosphate = D-erythrose 4-phosphate + beta-D-fructose 6-phosphate. Its pathway is carbohydrate degradation; pentose phosphate pathway; D-glyceraldehyde 3-phosphate and beta-D-fructose 6-phosphate from D-ribose 5-phosphate and D-xylulose 5-phosphate (non-oxidative stage): step 2/3. In terms of biological role, transaldolase is important for the balance of metabolites in the pentose-phosphate pathway. The chain is Probable transaldolase from Leptospira biflexa serovar Patoc (strain Patoc 1 / Ames).